A 251-amino-acid chain; its full sequence is MEMKQISETTLKITISMEDLEDRGMELKDFLIPQEKTEEFFYSVMDELDLPENFKNSGMLSFRVTPKKDRIDVFVTKSELSKDLNLEELADLGDISKMSPEDFFKTLEQSMLEKGDTDAHAKLAEIENMMDKATQEVVEENVSEEQPEKEVETIGYVHYVFDFDNIEAVVRFSQTIDFPIEASELYKNGKGYHMTILLDLENQPSYFANLMYARMLEHANVGTKTRAYLKEHSIQLIHDDAISKLQMIEMG.

It belongs to the MecA family. In terms of assembly, homodimer.

Its function is as follows. Enables the recognition and targeting of unfolded and aggregated proteins to the ClpC protease or to other proteins involved in proteolysis. The sequence is that of Adapter protein MecA from Streptococcus agalactiae serotype III (strain NEM316).